The sequence spans 107 residues: MKQFRIRKDDKVVVIAGKDKGKIGKVLKVLPKKDGVLVEKVNMVKRHMRANPYRQQPGGIIEKEMPLDISNVMVMCDACAKATKVGYRYTEDGKKVRFCKKCNEIIG.

It belongs to the universal ribosomal protein uL24 family. In terms of assembly, part of the 50S ribosomal subunit.

Functionally, one of two assembly initiator proteins, it binds directly to the 5'-end of the 23S rRNA, where it nucleates assembly of the 50S subunit. Its function is as follows. One of the proteins that surrounds the polypeptide exit tunnel on the outside of the subunit. This Nitratidesulfovibrio vulgaris (strain DSM 19637 / Miyazaki F) (Desulfovibrio vulgaris) protein is Large ribosomal subunit protein uL24.